Here is a 186-residue protein sequence, read N- to C-terminus: Glutathione S-transferase 1, isoform A (186 aa).

In terms of domain architecture, GST N-terminal spans 1 to 81 (MDFYYLPGSA…YLVEKYCAHD (81 aa)). Glutathione is bound by residues Ser-9, 50 to 52 (HCI), and 65 to 67 (ESR). A GST C-terminal domain is found at 92 to 186 (DPRRRAVVHQ…RRCRVRSAAI (95 aa)).

Belongs to the GST superfamily. Theta family. As to quaternary structure, homodimer.

It catalyses the reaction RX + glutathione = an S-substituted glutathione + a halide anion + H(+). Its function is as follows. Conjugation of reduced glutathione to a wide number of exogenous and endogenous hydrophobic electrophiles. This Anopheles gambiae (African malaria mosquito) protein is Glutathione S-transferase 1, isoform A.